Here is a 513-residue protein sequence, read N- to C-terminus: Xylose import ATP-binding protein XylG (513 aa).

ABC transporter domains follow at residues 5 to 242 and 259 to 505; these read LEMK…VGRE and LRIE…LRSE. ATP is bound at residue 37-44; it reads GENGSGKS.

The protein belongs to the ABC transporter superfamily. Xylose importer (TC 3.A.1.2.4) family. In terms of assembly, the complex is composed of two ATP-binding proteins (XylG), two transmembrane proteins (XylH) and a solute-binding protein (XylF).

The protein localises to the cell inner membrane. The catalysed reaction is D-xylose(out) + ATP + H2O = D-xylose(in) + ADP + phosphate + H(+). Functionally, part of the ABC transporter complex XylFGH involved in xylose import. Responsible for energy coupling to the transport system. The chain is Xylose import ATP-binding protein XylG from Escherichia coli (strain UTI89 / UPEC).